We begin with the raw amino-acid sequence, 97 residues long: Defensin-like protein 301 (97 aa).

An N-terminal signal peptide occupies residues 1–24; it reads MEKVTSIFFVLLLISSCLILRSQG. Disulfide bonds link Cys28–Cys47, Cys34–Cys53, Cys39–Cys55, Cys65–Cys84, Cys71–Cys92, and Cys76–Cys94.

It belongs to the DEFL family.

The protein localises to the secreted. This Arabidopsis thaliana (Mouse-ear cress) protein is Defensin-like protein 301.